Reading from the N-terminus, the 763-residue chain is Phosphoglycerol transferase I (763 aa).

Helical transmembrane passes span L4–W19, W26–S48, Y76–L98, and P105–A127.

It belongs to the OpgB family.

It is found in the cell inner membrane. The enzyme catalyses a phosphatidylglycerol + a membrane-derived-oligosaccharide D-glucose = a 1,2-diacyl-sn-glycerol + a membrane-derived-oligosaccharide 6-(glycerophospho)-D-glucose.. Its pathway is glycan metabolism; osmoregulated periplasmic glucan (OPG) biosynthesis. In terms of biological role, transfers a phosphoglycerol residue from phosphatidylglycerol to the membrane-bound nascent glucan backbones. In Shigella flexneri, this protein is Phosphoglycerol transferase I.